Reading from the N-terminus, the 30-residue chain is M-poneritoxin-Nc3a (30 aa).

Belongs to the ponericin-G family. In terms of tissue distribution, expressed by the venom gland.

Its subcellular location is the secreted. The protein resides in the target cell membrane. Functionally, membrane-perturbating peptide with multiple activities. It is insecticidal, since it induces contractile paralysis in insects (L.cuprina) during several hours and death after 24 hours. It shows a relatively strong and broad-spectrum antibacterial activity against both Gram-positive and Gram-negative bacteria (MIC&lt;20 uM). It is also antiparasitic, since it potently inhibits the larval development of the major pathogenic nematode of ruminants (H.contortus, IC(50)=5.6 uM) and reduces the motility of adult males of the other nematode B.malayi. It also shows cytotoxic activity against HEK293 cells (EC(50)=5-7 uM) but does not induce hemolysis in human erythrocytes. In addition, it causes a moderate increase in intracellular calcium concentration on neuronal and epithelial cell lines, which supports a non-specific membrane perturbation mechanism of action. In vivo, it induces pain by intraplantar injection into mice, suggesting a defensive function against vertebrate predators. This Neoponera commutata (Large hunting ant) protein is M-poneritoxin-Nc3a.